Here is a 590-residue protein sequence, read N- to C-terminus: NADH-ubiquinone oxidoreductase chain 5 (590 aa).

18 helical membrane passes run 1 to 21, 28 to 48, 58 to 78, 81 to 101, 113 to 133, 136 to 156, 176 to 198, 245 to 265, 273 to 293, 310 to 330, 333 to 353, 372 to 392, 395 to 415, 428 to 450, 461 to 481, 501 to 521, 536 to 556, and 568 to 588; these read MFLIFFLFFIMFGFISGSFMF, FWLSLVMIIFIVLCMIFSFLM, YYDFCLILMLDFCFIWLTYVC, FYMFIMLLINMVFCFIVFYAF, FLIIFWIFVVCMNLFILSYDF, AYCGWELLGLFSFFLISYFWY, VLLIFAFSIIFLSNGFCMTTFYF, ALIHAATLVVCGIILLSFVYW, YFYNLIGWSTLILILMTLCVF, ISFSMFCCLCIDIYIGSLFFC, MFYKATLFIVLGIWIHIFFGL, LLLIFAILNSCSIWFLCGFYC, MLLALLMLLSFYNIIEFLFIS, FLLFFLMFVFKCFCLVDCLFLLF, ISLYMCILSIFFIIDFVCIFV, IAIFVVFLILSVGFLYYGCLF, IFFVIIILVVFMIFCCWYFVC, and FVIYFRYNLKYCLFFCILWIL.

The protein belongs to the complex I subunit 5 family.

Its subcellular location is the mitochondrion inner membrane. It catalyses the reaction a ubiquinone + NADH + 5 H(+)(in) = a ubiquinol + NAD(+) + 4 H(+)(out). In terms of biological role, core subunit of the mitochondrial membrane respiratory chain NADH dehydrogenase (Complex I) that is believed to belong to the minimal assembly required for catalysis. Complex I functions in the transfer of electrons from NADH to the respiratory chain. The immediate electron acceptor for the enzyme is believed to be ubiquinone. This Trypanosoma brucei brucei protein is NADH-ubiquinone oxidoreductase chain 5 (ND5).